A 185-amino-acid polypeptide reads, in one-letter code: ATP-dependent protease subunit HslV (185 aa).

Thr14 is an active-site residue. Residues Ala168, Cys171, and Thr174 each contribute to the Na(+) site.

It belongs to the peptidase T1B family. HslV subfamily. In terms of assembly, a double ring-shaped homohexamer of HslV is capped on each side by a ring-shaped HslU homohexamer. The assembly of the HslU/HslV complex is dependent on binding of ATP.

It is found in the cytoplasm. It catalyses the reaction ATP-dependent cleavage of peptide bonds with broad specificity.. Allosterically activated by HslU binding. In terms of biological role, protease subunit of a proteasome-like degradation complex believed to be a general protein degrading machinery. This is ATP-dependent protease subunit HslV from Hyphomonas neptunium (strain ATCC 15444).